The primary structure comprises 285 residues: Inositol oxygenase (285 aa).

The tract at residues 1–28 (MKVAADPDPSLVSQRDMEPEAAKDKDSF) is disordered. Positions 15-28 (RDMEPEAAKDKDSF) are enriched in basic and acidic residues. Position 29 (Arg-29) interacts with substrate. Residue Ser-33 is modified to Phosphoserine. 85–87 (DES) contributes to the substrate binding site. His-98, His-123, and Asp-124 together coordinate Fe cation. Substrate-binding positions include Lys-127 and 141 to 142 (GD). Fe cation contacts are provided by His-194, His-220, and Asp-253. Substrate is bound at residue 220-221 (HS).

Belongs to the myo-inositol oxygenase family. Requires Fe cation as cofactor.

The protein localises to the cytoplasm. The catalysed reaction is myo-inositol + O2 = D-glucuronate + H2O + H(+). It participates in polyol metabolism; myo-inositol degradation into D-glucuronate; D-glucuronate from myo-inositol: step 1/1. The chain is Inositol oxygenase (MIOX) from Bos taurus (Bovine).